The following is a 907-amino-acid chain: Valine--tRNA ligase (907 aa).

The 'HIGH' region signature appears at Pro45–His55. Positions Lys554–Ser558 match the 'KMSKS' region motif. Lys557 serves as a coordination point for ATP. Positions Gly838–Asn870 form a coiled coil.

It belongs to the class-I aminoacyl-tRNA synthetase family. ValS type 1 subfamily. In terms of assembly, monomer.

Its subcellular location is the cytoplasm. The enzyme catalyses tRNA(Val) + L-valine + ATP = L-valyl-tRNA(Val) + AMP + diphosphate. Functionally, catalyzes the attachment of valine to tRNA(Val). As ValRS can inadvertently accommodate and process structurally similar amino acids such as threonine, to avoid such errors, it has a 'posttransfer' editing activity that hydrolyzes mischarged Thr-tRNA(Val) in a tRNA-dependent manner. This is Valine--tRNA ligase from Bartonella quintana (strain Toulouse) (Rochalimaea quintana).